A 368-amino-acid chain; its full sequence is tRNA 2-selenouridine synthase (368 aa).

In terms of domain architecture, Rhodanese spans methionine 15–aspartate 138. Residue cysteine 98 is the S-selanylcysteine intermediate of the active site.

It belongs to the SelU family. In terms of assembly, monomer.

It catalyses the reaction 5-methylaminomethyl-2-thiouridine(34) in tRNA + selenophosphate + (2E)-geranyl diphosphate + H2O + H(+) = 5-methylaminomethyl-2-selenouridine(34) in tRNA + (2E)-thiogeraniol + phosphate + diphosphate. The enzyme catalyses 5-methylaminomethyl-2-thiouridine(34) in tRNA + (2E)-geranyl diphosphate = 5-methylaminomethyl-S-(2E)-geranyl-thiouridine(34) in tRNA + diphosphate. It carries out the reaction 5-methylaminomethyl-S-(2E)-geranyl-thiouridine(34) in tRNA + selenophosphate + H(+) = 5-methylaminomethyl-2-(Se-phospho)selenouridine(34) in tRNA + (2E)-thiogeraniol. The catalysed reaction is 5-methylaminomethyl-2-(Se-phospho)selenouridine(34) in tRNA + H2O = 5-methylaminomethyl-2-selenouridine(34) in tRNA + phosphate. Functionally, involved in the post-transcriptional modification of the uridine at the wobble position (U34) of tRNA(Lys), tRNA(Glu) and tRNA(Gln). Catalyzes the conversion of 2-thiouridine (S2U-RNA) to 2-selenouridine (Se2U-RNA). Acts in a two-step process involving geranylation of 2-thiouridine (S2U) to S-geranyl-2-thiouridine (geS2U) and subsequent selenation of the latter derivative to 2-selenouridine (Se2U) in the tRNA chain. This Shewanella woodyi (strain ATCC 51908 / MS32) protein is tRNA 2-selenouridine synthase.